The following is a 140-amino-acid chain: Lymphocyte antigen 6 complex locus protein G5c (140 aa).

The first 41 residues, 1 to 41, serve as a signal peptide directing secretion; sequence MRFMAGPAGSQNPGPMCFHSSLQALYTVLLIVLVMMSLVFG. One can recognise a UPAR/Ly6 domain in the interval 60 to 140; it reads LRCYRCLLET…SQCCFLGFLQ (81 aa). Intrachain disulfides connect C62/C89, C65/C74, C81/C107, and C116/C133. Residue N96 is glycosylated (N-linked (GlcNAc...) asparagine).

As to quaternary structure, forms oligomers. In terms of processing, N-glycosylated.

It is found in the secreted. May have a role in hematopoietic cell differentiation. In Macaca mulatta (Rhesus macaque), this protein is Lymphocyte antigen 6 complex locus protein G5c (LY6G5C).